The chain runs to 451 residues: Arginine biosynthesis bifunctional protein ArgJ, mitochondrial (451 aa).

Positions 180, 209, 220, 307, 446, and 451 each coordinate substrate. Threonine 220 functions as the Nucleophile in the catalytic mechanism.

The protein belongs to the ArgJ family. Heterodimer of an alpha and a beta chain. Post-translationally, the alpha and beta chains are autoproteolytically processed from a single precursor protein within the mitochondrion.

It localises to the mitochondrion matrix. It carries out the reaction N(2)-acetyl-L-ornithine + L-glutamate = N-acetyl-L-glutamate + L-ornithine. The enzyme catalyses L-glutamate + acetyl-CoA = N-acetyl-L-glutamate + CoA + H(+). Its pathway is amino-acid biosynthesis; L-arginine biosynthesis; L-ornithine and N-acetyl-L-glutamate from L-glutamate and N(2)-acetyl-L-ornithine (cyclic): step 1/1. It functions in the pathway amino-acid biosynthesis; L-arginine biosynthesis; N(2)-acetyl-L-ornithine from L-glutamate: step 1/4. Catalyzes two activities which are involved in the cyclic version of arginine biosynthesis: the synthesis of acetylglutamate from glutamate and acetyl-CoA, and of ornithine by transacetylation between acetylornithine and glutamate. In Fusarium vanettenii (strain ATCC MYA-4622 / CBS 123669 / FGSC 9596 / NRRL 45880 / 77-13-4) (Fusarium solani subsp. pisi), this protein is Arginine biosynthesis bifunctional protein ArgJ, mitochondrial.